A 348-amino-acid polypeptide reads, in one-letter code: NADH-quinone oxidoreductase subunit H (348 aa).

9 helical membrane-spanning segments follow: residues 13–33, 50–70, 82–102, 115–135, 161–181, 198–218, 258–278, 285–305, and 321–341; these read LIMVGQSLLLLVCLLVAIAFL, PNVVGPFGLFQSFADLLKFIL, AVFLLAPLVAVTLALATYAVI, VGILYIFAISSLEVYGIIMGG, IGLVIVTVLLCVGSLNLTDIV, FLDWHWLSLFPMFIVFFISGL, AIVLICCLTTILFLGGWLPIV, WVPGIVWFALKGCMVFFMIAL, and LGWKVFLPLSLAMVVIVAFVL.

Belongs to the complex I subunit 1 family. As to quaternary structure, NDH-1 is composed of 14 different subunits. Subunits NuoA, H, J, K, L, M, N constitute the membrane sector of the complex.

Its subcellular location is the cell inner membrane. It carries out the reaction a quinone + NADH + 5 H(+)(in) = a quinol + NAD(+) + 4 H(+)(out). NDH-1 shuttles electrons from NADH, via FMN and iron-sulfur (Fe-S) centers, to quinones in the respiratory chain. The immediate electron acceptor for the enzyme in this species is believed to be ubiquinone. Couples the redox reaction to proton translocation (for every two electrons transferred, four hydrogen ions are translocated across the cytoplasmic membrane), and thus conserves the redox energy in a proton gradient. This subunit may bind ubiquinone. The polypeptide is NADH-quinone oxidoreductase subunit H (Agrobacterium fabrum (strain C58 / ATCC 33970) (Agrobacterium tumefaciens (strain C58))).